Here is an 88-residue protein sequence, read N- to C-terminus: MNEKKVECVLTGTVVSSNRDKTITVLIERKVRHPIYKKYIKRSTKVHAHDDKNECICGDLVRVVEAKPFSKTKHWSLLEVVERLVSVD.

This sequence belongs to the universal ribosomal protein uS17 family. As to quaternary structure, part of the 30S ribosomal subunit.

Its function is as follows. One of the primary rRNA binding proteins, it binds specifically to the 5'-end of 16S ribosomal RNA. The polypeptide is Small ribosomal subunit protein uS17 (Vesicomyosocius okutanii subsp. Calyptogena okutanii (strain HA)).